An 808-amino-acid polypeptide reads, in one-letter code: Probable phosphoketolase 1 (808 aa).

This sequence belongs to the XFP family. Thiamine diphosphate is required as a cofactor.

The chain is Probable phosphoketolase 1 from Nostoc sp. (strain PCC 7120 / SAG 25.82 / UTEX 2576).